Here is a 41-residue protein sequence, read N- to C-terminus: Augerpeptide-s11a (41 aa).

In terms of processing, contains 4 disulfide bonds. As to expression, expressed by the venom duct.

Its subcellular location is the secreted. Functionally, does not elicit any observable symptomatology in C.elegans. The chain is Augerpeptide-s11a from Terebra subulata (Chocolate spotted auger).